A 520-amino-acid chain; its full sequence is Pantetheine hydrolase VNN2 (520 aa).

The first 22 residues, 1–22, serve as a signal peptide directing secretion; the sequence is MVTSSFPISVAVFALITLQVGT. A CN hydrolase domain is found at 31-306; sequence YEHAVILPNK…GKLLLSEVDS (276 aa). N-linked (GlcNAc...) asparagine glycosylation is present at Asn-39. Glu-80 acts as the Proton acceptor in catalysis. The active-site Proton donor is the Lys-179. Catalysis depends on Cys-211, which acts as the Nucleophile. Asn-273, Asn-347, Asn-357, Asn-411, and Asn-468 each carry an N-linked (GlcNAc...) asparagine glycan. Residue Cys-493 is the site of GPI-anchor amidated cysteine attachment. Residues 494–520 constitute a propeptide, removed in mature form; the sequence is GTSNSAITYLLIFILLMIIALQNIVML.

Belongs to the carbon-nitrogen hydrolase superfamily. BTD/VNN family. As to expression, widely expressed with higher expression in spleen and blood.

It is found in the cell membrane. The enzyme catalyses (R)-pantetheine + H2O = cysteamine + (R)-pantothenate. Its function is as follows. Amidohydrolase that hydrolyzes specifically one of the carboamide linkages in D-pantetheine thus recycling pantothenic acid (vitamin B5) and releasing cysteamine. Involved in the thymus homing of bone marrow cells. May regulate beta-2 integrin-mediated cell adhesion, migration and motility of neutrophil. This is Pantetheine hydrolase VNN2 from Homo sapiens (Human).